Consider the following 142-residue polypeptide: Hemoglobin subunit zeta (142 aa).

N-acetylserine is present on Ser2. A Globin domain is found at 2–142 (SLTKAERTMV…VSSVLTEKYR (141 aa)). Ser53 carries the post-translational modification Phosphoserine. Heme b is bound at residue His59. Ser73 carries the post-translational modification Phosphoserine. His88 contacts heme b.

Belongs to the globin family. As to quaternary structure, heterotetramer of two zeta chains and beta-type chains.

Functionally, the zeta chain is an alpha-type chain of mammalian embryonic hemoglobin. In Equus caballus (Horse), this protein is Hemoglobin subunit zeta (HBZ1).